The following is a 641-amino-acid chain: MIKLENIKKSFITGGVSSEVLKGINLEIKKGEFVAIIGQSGSGKSTLMNILGCLDTPTSGKYLLDSLDISKFKKDELSNLRLKKFGFIFQRYNLLSSNDTKSNVALPGIYAGMSKADRINRAKDILVKLGLETKFDTMPNHLSGGQQQRVSIARALMNGGEILLCDEPTGALDSSSGVMVMQILDSLHKDGHTIIVVTHDKDIAAWADRIIEIKDGNIISDTRKNSQIYELKQNLKEIKPSLKAIRDQFFESFVMSLGAIKSHKLRSFLTMLGIIIGIASVICVVALAKGSQQKILSDINNMGTNTITIFPGKGFGDMHSGRVRSLSIDDSNLLGKLDFVDFSTPRMNTSGLLTYANQSFSGSLRSGSEYSLAISGLKIEKGRDFTKDDIINSRSNIIIDQFTKDAFFKDVDPIGKVILFNKQPFTIVGLVKRDETSFSGDNLTVYAPYTTTMNKLTGDRDIRSIMLKLKDGVNAQVAEQSIIEVLKIRRGSKDFFTRNSDTIRQTIESTMNTMSLLISGIALISLMVGGIGVMNIMLVSVFERTKEIGIRMAIGAKSKDIMTQFLIEAILLCAIGGSIGIGLAYAIGYGFNVFGGDFKMIFSTASIFIALGVSSLIGIVFGYIPARNASKLNPIDALLRE.

One can recognise an ABC transporter domain in the interval 2–240 (IKLENIKKSF…LKQNLKEIKP (239 aa)). 38 to 45 (GQSGSGKS) contributes to the ATP binding site. 4 helical membrane passes run 268–288 (FLTM…VALA), 516–536 (LLIS…VMNI), 565–585 (FLIE…GLAY), and 601–621 (IFST…GIVF).

Belongs to the ABC transporter superfamily. Macrolide exporter (TC 3.A.1.122) family. As to quaternary structure, homodimer.

It localises to the cell inner membrane. Its function is as follows. Non-canonical ABC transporter that contains transmembrane domains (TMD), which form a pore in the inner membrane, and an ATP-binding domain (NBD), which is responsible for energy generation. Confers resistance against macrolides. This chain is Macrolide export ATP-binding/permease protein MacB, found in Campylobacter fetus subsp. fetus (strain 82-40).